The primary structure comprises 275 residues: NH(3)-dependent NAD(+) synthetase (275 aa).

46 to 53 (GISGGQDS) contacts ATP. Residue D52 participates in Mg(2+) binding. R140 is a binding site for deamido-NAD(+). Residue T160 participates in ATP binding. Mg(2+) is bound at residue E165. Residues K173 and D180 each coordinate deamido-NAD(+). 2 residues coordinate ATP: K189 and T211. 260–261 (HK) provides a ligand contact to deamido-NAD(+).

This sequence belongs to the NAD synthetase family. Homodimer.

It catalyses the reaction deamido-NAD(+) + NH4(+) + ATP = AMP + diphosphate + NAD(+) + H(+). The protein operates within cofactor biosynthesis; NAD(+) biosynthesis; NAD(+) from deamido-NAD(+) (ammonia route): step 1/1. Its function is as follows. Catalyzes the ATP-dependent amidation of deamido-NAD to form NAD. Uses ammonia as a nitrogen source. This chain is NH(3)-dependent NAD(+) synthetase, found in Escherichia coli O157:H7.